Here is a 225-residue protein sequence, read N- to C-terminus: MSLPEPLLRADWPRERLLRHGAATLSDPELLALALRTGVAGCNAVQLGHDLLRRFGGLRGLLGTSPAELQVVPGLGTAKACVLAAVLELARRTLEEDLVRQDALANPDLVRRYCQAALGHRKVEHCIALYLDARLKLIICAEVARGTLTQAQIYPREIVREALRHHAAALILTHNHPGGTAAASAADIAMTRQIRQALALIDVRLIDHVIVAGAATVSMAAQGHL.

Positions 103–225 (ALANPDLVRR…TVSMAAQGHL (123 aa)) constitute an MPN domain. Zn(2+) is bound by residues H174, H176, and D187. Positions 174-187 (HNHPGGTAAASAAD) match the JAMM motif motif.

It belongs to the UPF0758 family.

This chain is UPF0758 protein BP1235, found in Bordetella pertussis (strain Tohama I / ATCC BAA-589 / NCTC 13251).